Reading from the N-terminus, the 223-residue chain is Probable Ras-related protein Rab-4A (223 aa).

16–23 (GNAGTGKT) contributes to the GTP binding site. Positions 38-46 (TQHTIGAEF) match the Effector region motif. GTP is bound by residues 64–68 (DTAGQ) and 122–125 (NKKD). 2 S-geranylgeranyl cysteine lipidation sites follow: Cys221 and Cys223. Residue Cys223 is modified to Cysteine methyl ester.

This sequence belongs to the small GTPase superfamily. Rab family.

It is found in the cell membrane. In terms of biological role, protein transport. Probably involved in vesicular traffic. The chain is Probable Ras-related protein Rab-4A from Echinococcus multilocularis (Fox tapeworm).